The sequence spans 630 residues: Pentatricopeptide repeat-containing protein At2g03880, mitochondrial (630 aa).

Residues 1–76 (MKSVMSKIKL…LIKCCISNRA (76 aa)) constitute a mitochondrion transit peptide. PPR repeat units follow at residues 60-94 (DSAT…GHRP), 95-125 (MMFL…MPQR), 126-160 (NVIS…NVRP), 161-192 (NVYT…GLES), 193-223 (DVFV…MVTG), 224-258 (DAIV…GFIA), 259-289 (EQAT…IVKY), 292-322 (DLIL…MKER), 323-357 (DVIT…GTKP), 358-388 (NYIT…MKKL), and 394-424 (VREH…MECE). Residues 429–504 (TWRTLLGACR…EPGCSWIEVN (76 aa)) are type E motif. The tract at residues 505–535 (KQIHAFIIGDNSHPQIVEVSKKLNQLIHRLT) is type E(+) motif. Positions 536–630 (GIGYVPETNF…DGKCSCGDYW (95 aa)) are type DYW motif.

The protein belongs to the PPR family. PCMP-H subfamily.

It is found in the mitochondrion. This is Pentatricopeptide repeat-containing protein At2g03880, mitochondrial (PCMP-H44) from Arabidopsis thaliana (Mouse-ear cress).